The sequence spans 386 residues: PqqA peptide cyclase (386 aa).

Positions 9 to 228 (SKPPLWLLAE…RQYIDQHHLK (220 aa)) constitute a Radical SAM core domain. The [4Fe-4S] cluster site is built by Cys-23, Cys-27, and Cys-30.

Belongs to the radical SAM superfamily. PqqE family. In terms of assembly, interacts with PqqD. The interaction is necessary for activity of PqqE. Requires [4Fe-4S] cluster as cofactor.

The catalysed reaction is [PQQ precursor protein] + S-adenosyl-L-methionine = E-Y cross-linked-[PQQ precursor protein] + 5'-deoxyadenosine + L-methionine + H(+). It participates in cofactor biosynthesis; pyrroloquinoline quinone biosynthesis. Its function is as follows. Catalyzes the cross-linking of a glutamate residue and a tyrosine residue in the PqqA protein as part of the biosynthesis of pyrroloquinoline quinone (PQQ). This is PqqA peptide cyclase from Acinetobacter baylyi (strain ATCC 33305 / BD413 / ADP1).